Reading from the N-terminus, the 177-residue chain is F(420)H(2) dehydrogenase subunit I (177 aa).

The tract at residues 1–21 is disordered; it reads MGCPEVQDRPGSGYELEETPA. 2 consecutive 4Fe-4S ferredoxin-type domains span residues 76 to 105 and 116 to 145; these read GLQT…IVKA and WFPQ…SGKE. [4Fe-4S] cluster is bound by residues Cys-85, Cys-88, Cys-91, Cys-95, Cys-125, Cys-128, Cys-131, and Cys-135.

The protein belongs to the complex I 23 kDa subunit family. In terms of assembly, the FPO complex is composed of at least 13 different subunits. [4Fe-4S] cluster serves as cofactor.

It catalyses the reaction methanophenazine + reduced coenzyme F420-(gamma-L-Glu)(n) = dihydromethanophenazine + oxidized coenzyme F420-(gamma-L-Glu)(n) + H(+). Its function is as follows. Component of the F(420)H(2) dehydrogenase (FPO complex) which is part of the energy-conserving F(420)H(2):heterodisulfide oxidoreductase system. The membrane-bound electron transfer system of the complex plays an important role in the metabolism of methylotrophic methanogens when the organisms grow on methanol or methylamines. Catalyzes the oxidation of methanophenazine to dihydromethanophenazine. It shuttles electrons from F(420)H(2), via FAD and iron-sulfur (Fe-S) centers, to methanophenazine (an electron carrier in the membrane). It couples the redox reaction to proton translocation (for every two electrons transferred, two hydrogen ions are translocated across the cytoplasmic membrane), and thus conserves the redox energy in a proton gradient. It also catalyzes the oxidation of F(420)H(2) with quinones such as 2,3-dimethyl-1,4-naphthoquinone, 2-methyl-1,4-naphthoquinone and tetramethyl-p-benzoquinone. This chain is F(420)H(2) dehydrogenase subunit I (fpoI), found in Methanosarcina mazei (strain ATCC BAA-159 / DSM 3647 / Goe1 / Go1 / JCM 11833 / OCM 88) (Methanosarcina frisia).